Here is a 432-residue protein sequence, read N- to C-terminus: Adenylosuccinate synthetase (432 aa).

Residues 12 to 18 (GDEGKGK) and 40 to 42 (GHT) each bind GTP. The active-site Proton acceptor is Asp-13. Asp-13 and Gly-40 together coordinate Mg(2+). IMP is bound by residues 13 to 16 (DEGK), 38 to 41 (NAGH), Thr-132, Arg-146, Gln-226, Thr-241, and Arg-305. The Proton donor role is filled by His-41. 301–307 (TVTGRKR) provides a ligand contact to substrate. Residues Arg-307, 333 to 335 (KLD), and 415 to 417 (STS) each bind GTP.

This sequence belongs to the adenylosuccinate synthetase family. As to quaternary structure, homodimer. Mg(2+) serves as cofactor.

Its subcellular location is the cytoplasm. The enzyme catalyses IMP + L-aspartate + GTP = N(6)-(1,2-dicarboxyethyl)-AMP + GDP + phosphate + 2 H(+). The protein operates within purine metabolism; AMP biosynthesis via de novo pathway; AMP from IMP: step 1/2. In terms of biological role, plays an important role in the de novo pathway of purine nucleotide biosynthesis. Catalyzes the first committed step in the biosynthesis of AMP from IMP. In Sinorhizobium medicae (strain WSM419) (Ensifer medicae), this protein is Adenylosuccinate synthetase.